Reading from the N-terminus, the 364-residue chain is Peptide chain release factor 1 (364 aa).

The residue at position 237 (Q237) is an N5-methylglutamine.

It belongs to the prokaryotic/mitochondrial release factor family. Methylated by PrmC. Methylation increases the termination efficiency of RF1.

The protein localises to the cytoplasm. Its function is as follows. Peptide chain release factor 1 directs the termination of translation in response to the peptide chain termination codons UAG and UAA. The chain is Peptide chain release factor 1 from Mycoplasma mycoides subsp. mycoides SC (strain CCUG 32753 / NCTC 10114 / PG1).